A 438-amino-acid chain; its full sequence is Anaerobic glycerol-3-phosphate dehydrogenase subunit B (438 aa).

This sequence belongs to the anaerobic G-3-P dehydrogenase subunit B family. In terms of assembly, composed of a catalytic GlpA/B dimer and of membrane bound GlpC. Requires FMN as cofactor.

It carries out the reaction a quinone + sn-glycerol 3-phosphate = dihydroxyacetone phosphate + a quinol. The protein operates within polyol metabolism; glycerol degradation via glycerol kinase pathway; glycerone phosphate from sn-glycerol 3-phosphate (anaerobic route): step 1/1. In terms of biological role, conversion of glycerol 3-phosphate to dihydroxyacetone. Uses fumarate or nitrate as electron acceptor. This chain is Anaerobic glycerol-3-phosphate dehydrogenase subunit B, found in Vibrio vulnificus (strain YJ016).